The sequence spans 453 residues: Bifunctional protein GlmU (453 aa).

The interval 1-226 (MVAIAILAAG…YEEILGINDR (226 aa)) is pyrophosphorylase. Residues 7 to 10 (LAAG), Lys-21, Gln-73, and 78 to 79 (GT) contribute to the UDP-N-acetyl-alpha-D-glucosamine site. Asp-103 contributes to the Mg(2+) binding site. Residues Gly-140, Glu-155, Asn-170, and Asn-224 each coordinate UDP-N-acetyl-alpha-D-glucosamine. Residue Asn-224 coordinates Mg(2+). The tract at residues 227–247 (KQLALAYQILQNRIKDQAMAA) is linker. Positions 248 to 453 (GVTLIDPDSI…GWRLKQPDPT (206 aa)) are N-acetyltransferase. Residues Arg-329 and Lys-347 each contribute to the UDP-N-acetyl-alpha-D-glucosamine site. His-359 acts as the Proton acceptor in catalysis. UDP-N-acetyl-alpha-D-glucosamine-binding residues include Tyr-362 and Asn-373. Residues Ala-376, 382-383 (NY), Ser-401, Ala-419, and Arg-436 contribute to the acetyl-CoA site.

It in the N-terminal section; belongs to the N-acetylglucosamine-1-phosphate uridyltransferase family. The protein in the C-terminal section; belongs to the transferase hexapeptide repeat family. Homotrimer. Requires Mg(2+) as cofactor.

It localises to the cytoplasm. It carries out the reaction alpha-D-glucosamine 1-phosphate + acetyl-CoA = N-acetyl-alpha-D-glucosamine 1-phosphate + CoA + H(+). The enzyme catalyses N-acetyl-alpha-D-glucosamine 1-phosphate + UTP + H(+) = UDP-N-acetyl-alpha-D-glucosamine + diphosphate. It functions in the pathway nucleotide-sugar biosynthesis; UDP-N-acetyl-alpha-D-glucosamine biosynthesis; N-acetyl-alpha-D-glucosamine 1-phosphate from alpha-D-glucosamine 6-phosphate (route II): step 2/2. Its pathway is nucleotide-sugar biosynthesis; UDP-N-acetyl-alpha-D-glucosamine biosynthesis; UDP-N-acetyl-alpha-D-glucosamine from N-acetyl-alpha-D-glucosamine 1-phosphate: step 1/1. It participates in bacterial outer membrane biogenesis; LPS lipid A biosynthesis. Its function is as follows. Catalyzes the last two sequential reactions in the de novo biosynthetic pathway for UDP-N-acetylglucosamine (UDP-GlcNAc). The C-terminal domain catalyzes the transfer of acetyl group from acetyl coenzyme A to glucosamine-1-phosphate (GlcN-1-P) to produce N-acetylglucosamine-1-phosphate (GlcNAc-1-P), which is converted into UDP-GlcNAc by the transfer of uridine 5-monophosphate (from uridine 5-triphosphate), a reaction catalyzed by the N-terminal domain. This is Bifunctional protein GlmU from Cyanothece sp. (strain PCC 7425 / ATCC 29141).